Here is a 495-residue protein sequence, read N- to C-terminus: UDP-glycosyltransferase 73C12 (495 aa).

Histidine 24 acts as the Proton acceptor in catalysis. Histidine 24 provides a ligand contact to an anthocyanidin. Residue aspartate 129 is the Charge relay of the active site. UDP-alpha-D-glucose contacts are provided by alanine 356, glutamine 358, histidine 373, tryptophan 376, asparagine 377, serine 378, and glutamate 381. Alanine 396 contributes to the an anthocyanidin binding site. UDP-alpha-D-glucose is bound by residues aspartate 397 and glutamine 398.

This sequence belongs to the UDP-glycosyltransferase family.

It carries out the reaction oleanolate + UDP-alpha-D-glucose = oleanolate 3-O-beta-D-glucoside + UDP + H(+). Its function is as follows. Catalyzes the transfer of a glucose (Glc) moiety from UDP-Glc to the C-3 position of the oleanane sapogenins oleanolate and hederagenin, and to the C-28 carboxylic group of the lupane sapogenin betulinate. The monoglucosylated hederagenin 3-O-beta-D-glucoside is a feeding deterrent of the yellow-striped flea beetle (Phyllotreta nemorum). The protein is UDP-glycosyltransferase 73C12 of Barbarea vulgaris (Yellow rocket).